Consider the following 117-residue polypeptide: DNA-directed RNA polymerase II subunit RPB11 (117 aa).

The protein belongs to the archaeal Rpo11/eukaryotic RPB11/RPC19 RNA polymerase subunit family. As to quaternary structure, component of the RNA polymerase II (Pol II) complex consisting of 12 subunits.

Its subcellular location is the nucleus. Functionally, DNA-dependent RNA polymerase catalyzes the transcription of DNA into RNA using the four ribonucleoside triphosphates as substrates. Component of RNA polymerase II which synthesizes mRNA precursors and many functional non-coding RNAs. Pol II is the central component of the basal RNA polymerase II transcription machinery. It is composed of mobile elements that move relative to each other. RPB11 is part of the core element with the central large cleft. This Drosophila melanogaster (Fruit fly) protein is DNA-directed RNA polymerase II subunit RPB11.